The sequence spans 293 residues: 4-diphosphocytidyl-2-C-methyl-D-erythritol kinase (293 aa).

The active site involves Lys16. An ATP-binding site is contributed by 99-109; that stretch reads PMGAGLGGGSS. The active site involves Asp141.

It belongs to the GHMP kinase family. IspE subfamily.

It catalyses the reaction 4-CDP-2-C-methyl-D-erythritol + ATP = 4-CDP-2-C-methyl-D-erythritol 2-phosphate + ADP + H(+). It functions in the pathway isoprenoid biosynthesis; isopentenyl diphosphate biosynthesis via DXP pathway; isopentenyl diphosphate from 1-deoxy-D-xylulose 5-phosphate: step 3/6. Functionally, catalyzes the phosphorylation of the position 2 hydroxy group of 4-diphosphocytidyl-2C-methyl-D-erythritol. In Paraburkholderia xenovorans (strain LB400), this protein is 4-diphosphocytidyl-2-C-methyl-D-erythritol kinase.